Consider the following 679-residue polypeptide: uncharacterized protein (679 aa).

The next 12 helical transmembrane spans lie at tyrosine 23–leucine 41, proline 46–isoleucine 65, isoleucine 72–leucine 90, tryptophan 94–histidine 113, tyrosine 120–isoleucine 142, isoleucine 157–leucine 179, tryptophan 362–alanine 381, serine 385–alanine 404, serine 411–valine 433, leucine 438–leucine 455, leucine 462–asparagine 481, and alanine 496–serine 515.

This sequence belongs to the aromatic acid exporter ArAE (TC 2.A.85) family.

The protein localises to the cell membrane. This is an uncharacterized protein from Salmonella typhimurium (strain LT2 / SGSC1412 / ATCC 700720).